The primary structure comprises 451 residues: MKNIEEMPSKSQLVAHRSRGLINTSNTCFMNVILQSLTGCQLFLRVIKNLSDLEDLGKYPTLHSFNQFYTEYFSNPTSNILNNNSNSTTTTSSSSTTATTTSTSNNNKSQTPTSPIQQHHQSQTNGLSNQPSVATQSQQQQQPQPPINPKHFNDLVKSFNSKVSPVPQTTVSPHSMVQVSKKKLKLQLYNNSLPQTICQQDAQEFLVFLLDLIHEEFLTLIKDIDIPKEDDKSTPTSTSIVDDNWEVVGKKGKTAIITNSQQELPKTPISQIFSGVLRSSFNRTGSKESITVEPFYCLHLDIRPEEINSLEDALKFFMKPEIIEGYTCSTKKIEISASKSWSFESLPRILIVHFKRFAFESDTSKKLDKLIRFPTQLSLSTASNHQTQKKYSLFSVVSHHGRGLSQGHYTCDIYQPQQAQWIRYDDSTFTEVKEQDVLNREAYLLLYQLVN.

The USP domain occupies 19–450 (RGLINTSNTC…EAYLLLYQLV (432 aa)). Residues 83–115 (NNSNSTTTTSSSSTTATTTSTSNNNKSQTPTSP) show a composition bias toward low complexity. The interval 83-154 (NNSNSTTTTS…PPINPKHFND (72 aa)) is disordered. Polar residues predominate over residues 116–135 (IQQHHQSQTNGLSNQPSVAT). The active-site Nucleophile is His399. His408 acts as the Proton acceptor in catalysis.

The protein belongs to the peptidase C19 family. In terms of assembly, interacts with mkkA (via F-box/WD40 domains).

The enzyme catalyses Thiol-dependent hydrolysis of ester, thioester, amide, peptide and isopeptide bonds formed by the C-terminal Gly of ubiquitin (a 76-residue protein attached to proteins as an intracellular targeting signal).. Required for proper prespore cell patterning. Plays a role in stabilizing mkkA by preventing it from being targeted for degradation. ubcB and ubpB differentially control ubiquitination/deubiquitination and degradation of mkkA in a cell-type-specific and temporally regulated manner. The protein is Ubiquitin hydrolase B (ubpB) of Dictyostelium discoideum (Social amoeba).